Here is a 481-residue protein sequence, read N- to C-terminus: Cardiolipin synthase A (481 aa).

2 helical membrane-spanning segments follow: residues 10–30 and 40–60; these read FFGYLLGLIHLLGVVAALHAL and IAWAMPLFFIPYLTLIPYLIF. PLD phosphodiesterase domains lie at 220–247 and 394–421; these read VNFRNHRKIVVVDGLLGFIGGHNVGDEY and QPGFLHQKVVLVDDEVSAIGSANLDNRS. Active-site residues include His-225, Lys-227, Asp-232, His-399, Lys-401, and Asp-406.

The protein belongs to the phospholipase D family. Cardiolipin synthase subfamily. ClsA sub-subfamily.

It localises to the cell inner membrane. The enzyme catalyses 2 a 1,2-diacyl-sn-glycero-3-phospho-(1'-sn-glycerol) = a cardiolipin + glycerol. Its function is as follows. Catalyzes the reversible phosphatidyl group transfer from one phosphatidylglycerol molecule to another to form cardiolipin (CL) (diphosphatidylglycerol) and glycerol. The sequence is that of Cardiolipin synthase A from Pseudomonas putida (Arthrobacter siderocapsulatus).